We begin with the raw amino-acid sequence, 98 residues long: MFEQRVNSDVLTVATVNSQDQVTQKPLRDSVKQALKNYFAQLNGQDVNDLYELVLAEVEQPLLDMVMQYTRGNQTRAALMMGINRGTLRKKLKKYGMN.

Residues 74–93 constitute a DNA-binding region (H-T-H motif); the sequence is QTRAALMMGINRGTLRKKLK.

It belongs to the transcriptional regulatory Fis family. As to quaternary structure, homodimer.

Activates ribosomal RNA transcription. Plays a direct role in upstream activation of rRNA promoters. This Photorhabdus laumondii subsp. laumondii (strain DSM 15139 / CIP 105565 / TT01) (Photorhabdus luminescens subsp. laumondii) protein is DNA-binding protein Fis.